Reading from the N-terminus, the 96-residue chain is Prokineticin Bo8 (96 aa).

Positions 1–19 are cleaved as a signal peptide; it reads MKCFAQIVVLLLVIAFSHG. Intrachain disulfides connect Cys-26/Cys-38, Cys-32/Cys-50, Cys-37/Cys-78, Cys-60/Cys-86, and Cys-80/Cys-95.

Expressed by the skin glands.

The protein localises to the secreted. Its function is as follows. Potent agonist for both PKR1/PROKR1 and PKR2/PROKR2, and inducer of a potent and long-lasting hyperalgesia. Also potentiates capsaicin-induced TRPV1 current, when tested on DRG neurons. At subnanomolar concentrations, this protein both induces potent chemotaxis of macrophages and stimulates LPS-induced production of the pro-inflammatory cytokines IL-1 and IL-12. In vivo, potently stimulates the contraction of the guinea-pig gastrointestinal (GI) smooth muscle (nanomolar concentration). The polypeptide is Prokineticin Bo8 (Bombina orientalis (Oriental fire-bellied toad)).